We begin with the raw amino-acid sequence, 194 residues long: HTH-type transcriptional regulator BetI (194 aa).

The HTH tetR-type domain maps to glutamate 8 to leucine 68. Positions threonine 31–phenylalanine 50 form a DNA-binding region, H-T-H motif.

The protein operates within amine and polyamine biosynthesis; betaine biosynthesis via choline pathway [regulation]. In terms of biological role, repressor involved in the biosynthesis of the osmoprotectant glycine betaine. It represses transcription of the choline transporter BetT and the genes of BetAB involved in the synthesis of glycine betaine. The sequence is that of HTH-type transcriptional regulator BetI from Burkholderia ambifaria (strain MC40-6).